The sequence spans 124 residues: BLOC-1-related complex subunit 8 (124 aa).

Residues 102-124 (SSSQGRSAVINPNETPAHTSVTP) are disordered.

This sequence belongs to the BORCS8 family.

It localises to the lysosome membrane. Functionally, as part of a BORC-like complex, it may play a role in the movement and localization of lysosomes at the cell periphery. Associated with the cytosolic face of lysosomes, this complex may couple lysosomes to microtubule plus-end-directed kinesin motors, driving lysosome movement toward the cell periphery. This is BLOC-1-related complex subunit 8 from Danio rerio (Zebrafish).